We begin with the raw amino-acid sequence, 376 residues long: MRLLVFLILLIFVNFSFANVRPNGRRFSESQYRTAFTEWTLKFNRQYSSSEFSNRYSIFKSNMDYVDNWNSKGDSQTVLGLNNFADITNEEYRKTYLGTRVNAHSYNGYDGREVLNVEDLQTNPKSIDWRTKNAVTPIKDQGQCGSCWSFSTTGSTEGAHALKTKKLVSLSEQNLVDCSGPEENFGCDGGLMNNAFDYIIKNKGIDTESSYPYTAETGSTCLFNKSDIGATIKGYVNITAGSEISLENGAQHGPVSVAIDASHNSFQLYTSGIYYEPKCSPTELDHGVLVVGYGVQGKDDEGPVLNRKQTIVIHKNEDNKVESSDDSSDSVRPKANNYWIVKNSWGTSWGIKGYILMSKDRKNNCGIASVSSYPLA.

An N-terminal signal peptide occupies residues 1 to 18; that stretch reads MRLLVFLILLIFVNFSFA. A propeptide spans 19-122 (activation peptide); sequence NVRPNGRRFS…EVLNVEDLQT (104 aa). 3 disulfides stabilise this stretch: Cys144-Cys187, Cys178-Cys221, and Cys279-Cys365. Cys147 is a catalytic residue. Active-site residues include His286 and Asn343.

Belongs to the peptidase C1 family.

It is found in the lysosome. Functionally, cysteine proteinases 1 and 2 are believed to participate in the breakdown of protein during differentiation of Dictyostelium as a response to starvation. This Dictyostelium discoideum (Social amoeba) protein is Cysteine proteinase 2 (cprB).